Consider the following 842-residue polypeptide: Glycogen phosphorylase, muscle form (842 aa).

S2 carries the N-acetylserine modification. The residue at position 15 (S15) is a Phosphoserine; by PHK; in form phosphorylase A. AMP contacts are provided by D43 and Y76. Phosphotyrosine is present on residues Y204 and Y227. AMP is bound at residue 310-319 (RRFKSSKFGS). Phosphoserine is present on S430. A Phosphotyrosine modification is found at Y473. S514 carries the post-translational modification Phosphoserine. At K681 the chain carries N6-(pyridoxal phosphate)lysine. Phosphoserine occurs at positions 747 and 748.

This sequence belongs to the glycogen phosphorylase family. In terms of assembly, homodimer. Homotetramer; to form the enzymatically active phosphorylase A. Requires pyridoxal 5'-phosphate as cofactor. Phosphorylation of Ser-15 converts phosphorylase B (unphosphorylated) to phosphorylase A.

The enzyme catalyses [(1-&gt;4)-alpha-D-glucosyl](n) + phosphate = [(1-&gt;4)-alpha-D-glucosyl](n-1) + alpha-D-glucose 1-phosphate. Allosterically regulated through the non-covalent binding of metabolites, being activated by AMP and inhibited by ATP, ADP, and glucose-6-phosphate. The activity is also controlled by post-translational modifications including phosphorylation. Its function is as follows. Allosteric enzyme that catalyzes the rate-limiting step in glycogen catabolism, the phosphorolytic cleavage of glycogen to produce glucose-1-phosphate, and plays a central role in maintaining cellular and organismal glucose homeostasis. The protein is Glycogen phosphorylase, muscle form of Mus musculus (Mouse).